A 404-amino-acid polypeptide reads, in one-letter code: Putative glutamate--cysteine ligase 2 (404 aa).

The disordered stretch occupies residues 377 to 404 (GPAGKRAHEGGRSFRPAAGAPMSIRGQE).

Belongs to the glutamate--cysteine ligase type 2 family. YbdK subfamily.

The catalysed reaction is L-cysteine + L-glutamate + ATP = gamma-L-glutamyl-L-cysteine + ADP + phosphate + H(+). In terms of biological role, ATP-dependent carboxylate-amine ligase which exhibits weak glutamate--cysteine ligase activity. The protein is Putative glutamate--cysteine ligase 2 of Pseudomonas aeruginosa (strain UCBPP-PA14).